Consider the following 513-residue polypeptide: Putative BTB/POZ domain-containing protein L55 (513 aa).

The 73-residue stretch at 11 to 83 (SPIKIILQDI…FHGYKMEISD (73 aa)) folds into the BTB domain.

It belongs to the mimivirus BTB/WD family.

This is Putative BTB/POZ domain-containing protein L55 from Acanthamoeba polyphaga (Amoeba).